The sequence spans 606 residues: Sulfite reductase [NADPH] flavoprotein alpha-component (606 aa).

The Flavodoxin-like domain maps to 68–206; the sequence is ITILSASQTG…AAEAWRKEVT (139 aa). FMN contacts are provided by residues 74–79, 121–124, and 157–166; these read SQTGNA, STQG, and LGDITYEHFA. The 215-residue stretch at 240–454 folds into the FAD-binding FR-type domain; that stretch reads ESPLTATLSV…VEHNDNFRLP (215 aa). FAD-binding positions include Thr328, Gln362, 392-395, 410-412, Tyr416, and 425-428; these read RLYS, TVG, and GGAS. Residues 525-526, 531-535, and Asp568 contribute to the NADP(+) site; these read SR and KVYVQ. Tyr606 is a binding site for FAD.

It belongs to the NADPH-dependent sulphite reductase flavoprotein subunit CysJ family. The protein in the N-terminal section; belongs to the flavodoxin family. In the C-terminal section; belongs to the flavoprotein pyridine nucleotide cytochrome reductase family. Alpha(8)-beta(8). The alpha component is a flavoprotein, the beta component is a hemoprotein. It depends on FAD as a cofactor. FMN serves as cofactor.

It catalyses the reaction hydrogen sulfide + 3 NADP(+) + 3 H2O = sulfite + 3 NADPH + 4 H(+). Its pathway is sulfur metabolism; hydrogen sulfide biosynthesis; hydrogen sulfide from sulfite (NADPH route): step 1/1. Its function is as follows. Component of the sulfite reductase complex that catalyzes the 6-electron reduction of sulfite to sulfide. This is one of several activities required for the biosynthesis of L-cysteine from sulfate. The flavoprotein component catalyzes the electron flow from NADPH -&gt; FAD -&gt; FMN to the hemoprotein component. This chain is Sulfite reductase [NADPH] flavoprotein alpha-component, found in Zymomonas mobilis subsp. mobilis (strain ATCC 31821 / ZM4 / CP4).